We begin with the raw amino-acid sequence, 484 residues long: Glutamyl-tRNA(Gln) amidotransferase subunit A (484 aa).

Active-site charge relay system residues include K76 and S151. The Acyl-ester intermediate role is filled by S175.

It belongs to the amidase family. GatA subfamily. As to quaternary structure, heterotrimer of A, B and C subunits.

The catalysed reaction is L-glutamyl-tRNA(Gln) + L-glutamine + ATP + H2O = L-glutaminyl-tRNA(Gln) + L-glutamate + ADP + phosphate + H(+). In terms of biological role, allows the formation of correctly charged Gln-tRNA(Gln) through the transamidation of misacylated Glu-tRNA(Gln) in organisms which lack glutaminyl-tRNA synthetase. The reaction takes place in the presence of glutamine and ATP through an activated gamma-phospho-Glu-tRNA(Gln). This is Glutamyl-tRNA(Gln) amidotransferase subunit A from Hahella chejuensis (strain KCTC 2396).